The sequence spans 1112 residues: Glutamate receptor-interacting protein 1 (1112 aa).

Ser43 carries the post-translational modification Phosphoserine. PDZ domains follow at residues 53–136, 150–238, 252–336, 471–560, 572–657, and 672–754; these read VVEL…EYEL, TVEV…EYDV, LVEV…LPHH, EVVL…EFDV, HVKL…RKDE, and TVEL…KKQT. Disordered regions lie at residues 752-796, 841-886, and 922-963; these read KQTD…VYPS, KRAS…AEQE, and NHEA…DVGR. A compositionally biased stretch (low complexity) spans 869–880; the sequence is STASGFAGASDS. A compositionally biased stretch (polar residues) spans 928 to 958; sequence ARSQLGRQASFQERSNSRPHYSQTTRSNTLP. In terms of domain architecture, PDZ 7 spans 988 to 1070; sequence KVTLYKDSGM…KLDLVISRNP (83 aa). The disordered stretch occupies residues 1077–1112; sequence IEQPALPSDWSEQNSAFFQQPSHGGNLETREPTNTL. Residues 1086 to 1099 show a composition bias toward polar residues; that stretch reads WSEQNSAFFQQPSH.

In terms of assembly, interacts with EFNB1, EPHA7, EPHB2, EFNB3, KIF5A, KIF5C, KIF5B and the C-terminal tail of PRLHR. Forms a ternary complex with GRIA2 and CSPG4. Can form homomultimers or heteromultimers with GRIP2. Interacts with GRIA2, GRIA3, GRIPAP1/GRASP1, PPFIA1, PPFIA4, FRAS1, PLCD4, PTPRF and liprins-alpha. Interacts with ATAD1 in an ATP-dependent manner. ATAD1-catalyzed ATP hydrolysis disrupts binding to ATAD1 and to GRIA2 and leads to AMPAR complex disassembly. Interacts with SLC30A9. Interacts with BUD23. Forms a complex with NSG1, GRIA2 and STX12; controls the intracellular fate of AMPAR and the endosomal sorting of the GRIA2 subunit toward recycling and membrane targeting. Interacts with NSG1. Expressed in brain, testis and retina. In brain highly expressed in the olfactory bulb, cortex and hippocampus and lower level in thalamus, cerebellum and spinal cord. In brain it is found in the perikaryon, dendrites, dendritic shafts, dendritic spines and, excitatory and inhibitory synapses of neurons. In retina, it is most abundant in the plexiform layers than in perikarya.

It localises to the cytoplasmic vesicle. It is found in the perikaryon. Its subcellular location is the cell projection. The protein resides in the dendrite. The protein localises to the cytoplasm. It localises to the endomembrane system. It is found in the postsynaptic cell membrane. Its subcellular location is the postsynaptic density. The protein resides in the endoplasmic reticulum membrane. In terms of biological role, may play a role as a localized scaffold for the assembly of a multiprotein signaling complex and as mediator of the trafficking of its binding partners at specific subcellular location in neurons. Through complex formation with NSG1, GRIA2 and STX12 controls the intracellular fate of AMPAR and the endosomal sorting of the GRIA2 subunit toward recycling and membrane targeting. This Rattus norvegicus (Rat) protein is Glutamate receptor-interacting protein 1 (Grip1).